Here is a 257-residue protein sequence, read N- to C-terminus: Snake venom serine protease 2C (257 aa).

The first 18 residues, 1–18, serve as a signal peptide directing secretion; that stretch reads MVLIRVLANLLILQLSYA. Residues 19–24 constitute a propeptide that is removed on maturation; it reads QKSSEL. Positions 25–248 constitute a Peptidase S1 domain; it reads VIGGHPCNIN…HLDWIKSIIA (224 aa). Disulfide bonds link Cys31/Cys162, Cys49/Cys65, Cys97/Cys255, Cys141/Cys209, Cys173/Cys188, and Cys199/Cys224. Residues His64 and Asp109 each act as charge relay system in the active site. N-linked (GlcNAc...) asparagine glycosylation is found at Asn116, Asn120, and Asn121. Ser203 (charge relay system) is an active-site residue.

It belongs to the peptidase S1 family. Snake venom subfamily. In terms of assembly, monomer. In terms of tissue distribution, expressed by the venom gland.

Its subcellular location is the secreted. In terms of biological role, snake venom serine protease that may act in the hemostasis system of the prey. This chain is Snake venom serine protease 2C (TLG2C), found in Craspedocephalus gramineus (Bamboo pit viper).